Consider the following 208-residue polypeptide: Uracil phosphoribosyltransferase (208 aa).

Residues R78, R103, and 130–138 (DPMLATGGS) contribute to the 5-phospho-alpha-D-ribose 1-diphosphate site. Uracil contacts are provided by residues I193 and 198-200 (GDA). Position 199 (D199) interacts with 5-phospho-alpha-D-ribose 1-diphosphate.

Belongs to the UPRTase family. It depends on Mg(2+) as a cofactor.

The enzyme catalyses UMP + diphosphate = 5-phospho-alpha-D-ribose 1-diphosphate + uracil. The protein operates within pyrimidine metabolism; UMP biosynthesis via salvage pathway; UMP from uracil: step 1/1. Its activity is regulated as follows. Allosterically activated by GTP. Functionally, catalyzes the conversion of uracil and 5-phospho-alpha-D-ribose 1-diphosphate (PRPP) to UMP and diphosphate. This is Uracil phosphoribosyltransferase from Citrobacter koseri (strain ATCC BAA-895 / CDC 4225-83 / SGSC4696).